Consider the following 91-residue polypeptide: Non-specific lipid-transfer protein 1 (91 aa).

4 disulfides stabilise this stretch: C3/C50, C13/C27, C28/C73, and C48/C87.

It belongs to the plant LTP family.

In terms of biological role, plant non-specific lipid-transfer proteins transfer phospholipids as well as galactolipids across membranes. May play a role in wax or cutin deposition in the cell walls of expanding epidermal cells and certain secretory tissues. In Prunus armeniaca (Apricot), this protein is Non-specific lipid-transfer protein 1.